Consider the following 89-residue polypeptide: Signal recognition particle 19 kDa protein (89 aa).

Belongs to the SRP19 family. As to quaternary structure, part of the signal recognition particle protein translocation system, which is composed of SRP and FtsY. Archaeal SRP consists of a 7S RNA molecule of 300 nucleotides and two protein subunits: SRP54 and SRP19.

Its subcellular location is the cytoplasm. Involved in targeting and insertion of nascent membrane proteins into the cytoplasmic membrane. Binds directly to 7S RNA and mediates binding of the 54 kDa subunit of the SRP. This Methanococcus maripaludis (strain C7 / ATCC BAA-1331) protein is Signal recognition particle 19 kDa protein.